A 284-amino-acid chain; its full sequence is Proteasome subunit beta 1 (284 aa).

A propeptide spans 1–56 (MASHDSYTGRLPGAFMNPGTSSFTEFLASYNPDLLPGRHMTALAGGMPGNVEAPHA) (removed in mature form; by autocatalysis). The active-site Nucleophile is Thr-57.

Belongs to the peptidase T1B family. In terms of assembly, the 20S proteasome core is composed of 14 alpha and 14 beta subunits that assemble into four stacked heptameric rings, resulting in a barrel-shaped structure. The two inner rings, each composed of seven catalytic beta subunits, are sandwiched by two outer rings, each composed of seven alpha subunits. The catalytic chamber with the active sites is on the inside of the barrel. Has a gated structure, the ends of the cylinder being occluded by the N-termini of the alpha-subunits. Is capped by the proteasome-associated ATPase, ARC.

The protein resides in the cytoplasm. The enzyme catalyses Cleavage of peptide bonds with very broad specificity.. It functions in the pathway protein degradation; proteasomal Pup-dependent pathway. Its activity is regulated as follows. The formation of the proteasomal ATPase ARC-20S proteasome complex, likely via the docking of the C-termini of ARC into the intersubunit pockets in the alpha-rings, may trigger opening of the gate for substrate entry. Interconversion between the open-gate and close-gate conformations leads to a dynamic regulation of the 20S proteasome proteolysis activity. In terms of biological role, component of the proteasome core, a large protease complex with broad specificity involved in protein degradation. The protein is Proteasome subunit beta 1 of Thermomonospora curvata (strain ATCC 19995 / DSM 43183 / JCM 3096 / KCTC 9072 / NBRC 15933 / NCIMB 10081 / Henssen B9).